Here is a 130-residue protein sequence, read N- to C-terminus: MPKEIRWGVAHIFSSPNNTFVHITDITGSETASRVTGGMVVKADHEKPSPYAAMIAAARAAQQAMERGITAIHIKVRAPGGYGPKTPGPGAQAAIRALARSGFIIGRIEDVTPLPHDTIRRPGGRRGRRV.

This sequence belongs to the universal ribosomal protein uS11 family. As to quaternary structure, part of the 30S ribosomal subunit.

In terms of biological role, located on the platform of the 30S subunit. In Ignicoccus hospitalis (strain KIN4/I / DSM 18386 / JCM 14125), this protein is Small ribosomal subunit protein uS11.